A 72-amino-acid polypeptide reads, in one-letter code: Heat shock factor-binding protein 1-like protein 1 (72 aa).

Positions 12 to 62 (DLLQNAAENLLLEVEEHFQALTTTLNLRMEEMGSRIEDLQRNVDDLMTQAG) form a coiled coil.

It belongs to the HSBP1 family.

This Mus musculus (Mouse) protein is Heat shock factor-binding protein 1-like protein 1 (Hsbp1l1).